Here is a 531-residue protein sequence, read N- to C-terminus: Pancreatic secretory granule membrane major glycoprotein GP2 (531 aa).

The first 21 residues, 1 to 21 (MVGCDLLWLAAASCVLTLVSP), serve as a signal peptide directing secretion. N-linked (GlcNAc...) asparagine glycosylation occurs at N33. Residues 34–53 (SSNLDLDCGSPDSPSSGICF) form a beta hairpin region. 11 disulfides stabilise this stretch: C41/C52, C56/C151, C79/C169, C101/C139, C107/C174, C132/C140, C184/C194, C188/C203, C205/C235, C223/C314, and C255/C278. A D10C region spans residues 54–74 (DPCQNHTVLNDPTRSTENNDS). 2 N-linked (GlcNAc...) asparagine glycosylation sites follow: N58 and N72. The EGF-like domain maps to 180–224 (APKNCEITCRPEEECVFQNNNWSCVCRQDLHVSDSQSLQPLLDCG). N200 carries an N-linked (GlcNAc...) asparagine glycan. Residues 222–315 (DCGDNEIKVK…FRVNVNFQCA (94 aa)) are ZP-N. Residues 222 to 478 (DCGDNEIKVK…PSCSTNRLRS (257 aa)) enclose the ZP domain. Residues N256 and N285 are each glycosylated (N-linked (GlcNAc...) asparagine). The tract at residues 316-339 (YPLDMSVSLETALQPIVSSLTVDV) is flexible ZP-N/ZP-C linker. An internal hydrophobic patch (IHP) region spans residues 340–351 (DGAGEFNVKMAL). Residues 340–478 (DGAGEFNVKM…PSCSTNRLRS (139 aa)) form a ZP-C region. Cystine bridges form between C395-C455, C416-C471, and C460-C467. Positions 485 to 493 (YNRVLDLGP) are external hydrophobic patch (EHP).

Interacts with SYCN. Interacts with bacterial adhesin fimH. In terms of processing, N-glycosylated. In terms of tissue distribution, specifically expressed by M (microfold) cells which are atypical epithelial cells of the intestine.

The protein localises to the zymogen granule membrane. It is found in the secreted. It localises to the cell membrane. The protein resides in the apical cell membrane. Its subcellular location is the membrane raft. The protein localises to the endosome. Functions as an intestinal M-cell transcytotic receptor specific of type-I-piliated bacteria that participates in the mucosal immune response toward these bacteria. At the apical membrane of M-cells it binds fimH, a protein of the bacteria type I pilus tip. Internalizes bound bacteria, like E.coli and S.typhimurium, from the lumen of the intestine and delivers them, through M-cells, to the underlying organized lymphoid follicles where they are captured by antigen-presenting dendritic cells to elicit a mucosal immune response. This chain is Pancreatic secretory granule membrane major glycoprotein GP2, found in Mus musculus (Mouse).